We begin with the raw amino-acid sequence, 344 residues long: MASGVGAACEELPPDGTCDECEPDEAPGAEEVCRDCGFCYCRRHADAHRQKFLSHRLAAYVHGAQAWTPPASGDDALPEDVEAKGEAEGEVESEVGEEESESEVDSESEEESETEEDSEDESDEESEEDSEEEMEDEQESEAEEDNQEGESEAEGETEAESEFDPEIEMEAERVAKRKCPDHGLDLSTYCQEDRQLICVLCPVIGAHRGHQLSTLDEAFEELRSKDSGGLKAAMIELVERLKFKSSDPKVTRDQMKVFIQQEFKKVQKVIADEEQKALHLVDIQEAMATAHVTEILADIQSHMDRLMTQMAQAKEQLDTSNESAEPKAEGDEEGPSGASEEEDT.

The segment at 69-165 is disordered; that stretch reads PPASGDDALP…ETEAESEFDP (97 aa). Positions 88 to 165 are enriched in acidic residues; that stretch reads EGEVESEVGE…ETEAESEFDP (78 aa). The B box-type zinc-finger motif lies at 174–215; that stretch reads VAKRKCPDHGLDLSTYCQEDRQLICVLCPVIGAHRGHQLSTL. The Zn(2+) site is built by cysteine 179, histidine 182, cysteine 201, and histidine 207. The stretch at 290–325 forms a coiled coil; it reads AHVTEILADIQSHMDRLMTQMAQAKEQLDTSNESAE. The disordered stretch occupies residues 309 to 344; the sequence is QMAQAKEQLDTSNESAEPKAEGDEEGPSGASEEEDT. Residues 330–344 show a composition bias toward acidic residues; sequence GDEEGPSGASEEEDT. Residues serine 336 and serine 339 each carry the phosphoserine modification.

In terms of assembly, interacts (via coiled coil) with TRIM17 (via coiled coil).

Its function is as follows. May play a role in the process of differentiation and maturation of neuronal cells. May regulate the activity of TRIM17. Is a negative regulator of PAX6 expression. The sequence is that of Tripartite motif-containing protein 44 (Trim44) from Rattus norvegicus (Rat).